The sequence spans 229 residues: 7-cyano-7-deazaguanine synthase (229 aa).

15–25 serves as a coordination point for ATP; the sequence is LSGGLDSTTCL. The Zn(2+) site is built by C192, C202, C205, and C208.

It belongs to the QueC family. Requires Zn(2+) as cofactor.

The catalysed reaction is 7-carboxy-7-deazaguanine + NH4(+) + ATP = 7-cyano-7-deazaguanine + ADP + phosphate + H2O + H(+). Its pathway is purine metabolism; 7-cyano-7-deazaguanine biosynthesis. Its function is as follows. Catalyzes the ATP-dependent conversion of 7-carboxy-7-deazaguanine (CDG) to 7-cyano-7-deazaguanine (preQ(0)). The chain is 7-cyano-7-deazaguanine synthase from Acinetobacter baylyi (strain ATCC 33305 / BD413 / ADP1).